The chain runs to 263 residues: Ribosomal RNA small subunit methyltransferase J (263 aa).

S-adenosyl-L-methionine contacts are provided by residues 108–109 (RD), 124–125 (ER), and D178.

It belongs to the methyltransferase superfamily. RsmJ family.

Its subcellular location is the cytoplasm. It carries out the reaction guanosine(1516) in 16S rRNA + S-adenosyl-L-methionine = N(2)-methylguanosine(1516) in 16S rRNA + S-adenosyl-L-homocysteine + H(+). Functionally, specifically methylates the guanosine in position 1516 of 16S rRNA. The sequence is that of Ribosomal RNA small subunit methyltransferase J from Idiomarina loihiensis (strain ATCC BAA-735 / DSM 15497 / L2-TR).